We begin with the raw amino-acid sequence, 456 residues long: Myricetin 3-O-rhamnosyltransferase UGT77B2 (456 aa).

The active-site Proton acceptor is histidine 19. An an anthocyanidin-binding site is contributed by histidine 19. Aspartate 116 acts as the Charge relay in catalysis. Histidine 147 serves as a coordination point for an anthocyanidin. UDP-beta-L-rhamnose contacts are provided by threonine 279, alanine 334, histidine 351, asparagine 355, and glutamate 359. Alanine 374 lines the an anthocyanidin pocket.

The protein belongs to the UDP-glycosyltransferase family. As to expression, expressed in young cromes.

The enzyme catalyses myricetin + UDP-beta-L-rhamnose = myricetin 3-O-alpha-L-rhamnoside + UDP + H(+). It functions in the pathway flavonoid metabolism. Rhamnosyltransferase involved in montbretin A (MbA) biosynthesis. Catalyzes the 3-O rhamnosylation of myricetin to produce myricetin 3-O-alpha-L-rhamnoside (MR), a precursor of MbA. MbA is a potent inhibitor of human pancreatic alpha-amylase and is being developed as drug candidate to treat type-2 diabetes. In vitro, is able to transfer UDP-glucose and UDP-xylose with 50-fold less efficiency compared with UDP-rhamnose. In vitro, can use kaempferol or quercetin as substrates, although these two flavonols may not be physiological substrates in vivo. In Crocosmia x crocosmiiflora (Montbretia), this protein is Myricetin 3-O-rhamnosyltransferase UGT77B2.